We begin with the raw amino-acid sequence, 652 residues long: Chaperone protein HtpG (652 aa).

The tract at residues 1–351 (MTEHVEQLEF…AQDLSLNVSR (351 aa)) is a; substrate-binding. Positions 352–568 (EILQQDRQIQ…VFDFTPMLER (217 aa)) are b. Residues 569–652 (MYRASGQPVP…ILTDRLTRTL (84 aa)) are c.

It belongs to the heat shock protein 90 family. In terms of assembly, homodimer.

The protein resides in the cytoplasm. Functionally, molecular chaperone. Has ATPase activity. In Nocardia farcinica (strain IFM 10152), this protein is Chaperone protein HtpG.